The chain runs to 227 residues: MAHPFQTGLQDATSPIMEELLHFHDHTLMIVFLISSLVLYIISIMLTTKLTHTNTMDAQEVETVWTILPAIILIMIALPSLRILYMMDEINNPSLTVKTMGHQWYWSYEYTDYEDLSFDSYMTPTQELKPGELRLLEVDNRVVLPMEMTIRMLISSEDVLHSWAVPSLGLKTDAIPGRLNQTTLMAMRPGLYYGQCSEICGSNHSFMPIVLEMVPLSYFEKWSASML.

Topologically, residues M1–S14 are mitochondrial intermembrane. A helical membrane pass occupies residues P15 to M45. Over L46–Q59 the chain is Mitochondrial matrix. The helical transmembrane segment at E60 to M87 threads the bilayer. Topologically, residues D88–L227 are mitochondrial intermembrane. The Cu cation site is built by H161, C196, E198, C200, H204, and M207. E198 provides a ligand contact to Mg(2+). The residue at position 218 (Y218) is a Phosphotyrosine.

This sequence belongs to the cytochrome c oxidase subunit 2 family. In terms of assembly, component of the cytochrome c oxidase (complex IV, CIV), a multisubunit enzyme composed of 14 subunits. The complex is composed of a catalytic core of 3 subunits MT-CO1, MT-CO2 and MT-CO3, encoded in the mitochondrial DNA, and 11 supernumerary subunits COX4I, COX5A, COX5B, COX6A, COX6B, COX6C, COX7A, COX7B, COX7C, COX8 and NDUFA4, which are encoded in the nuclear genome. The complex exists as a monomer or a dimer and forms supercomplexes (SCs) in the inner mitochondrial membrane with NADH-ubiquinone oxidoreductase (complex I, CI) and ubiquinol-cytochrome c oxidoreductase (cytochrome b-c1 complex, complex III, CIII), resulting in different assemblies (supercomplex SCI(1)III(2)IV(1) and megacomplex MCI(2)III(2)IV(2)). Found in a complex with TMEM177, COA6, COX18, COX20, SCO1 and SCO2. Interacts with TMEM177 in a COX20-dependent manner. Interacts with COX20. Interacts with COX16. It depends on Cu cation as a cofactor.

It localises to the mitochondrion inner membrane. It catalyses the reaction 4 Fe(II)-[cytochrome c] + O2 + 8 H(+)(in) = 4 Fe(III)-[cytochrome c] + 2 H2O + 4 H(+)(out). Functionally, component of the cytochrome c oxidase, the last enzyme in the mitochondrial electron transport chain which drives oxidative phosphorylation. The respiratory chain contains 3 multisubunit complexes succinate dehydrogenase (complex II, CII), ubiquinol-cytochrome c oxidoreductase (cytochrome b-c1 complex, complex III, CIII) and cytochrome c oxidase (complex IV, CIV), that cooperate to transfer electrons derived from NADH and succinate to molecular oxygen, creating an electrochemical gradient over the inner membrane that drives transmembrane transport and the ATP synthase. Cytochrome c oxidase is the component of the respiratory chain that catalyzes the reduction of oxygen to water. Electrons originating from reduced cytochrome c in the intermembrane space (IMS) are transferred via the dinuclear copper A center (CU(A)) of subunit 2 and heme A of subunit 1 to the active site in subunit 1, a binuclear center (BNC) formed by heme A3 and copper B (CU(B)). The BNC reduces molecular oxygen to 2 water molecules using 4 electrons from cytochrome c in the IMS and 4 protons from the mitochondrial matrix. This is Cytochrome c oxidase subunit 2 (MT-CO2) from Ailuropoda melanoleuca (Giant panda).